A 689-amino-acid chain; its full sequence is Acetyl-coenzyme A synthetase 2-like, mitochondrial (689 aa).

The N-terminal 37 residues, 1–37 (MAARTLGRGVGRLLGSLRGLSGQPARPPCGVSAPRRA), are a transit peptide targeting the mitochondrion. Positions 17–46 (LRGLSGQPARPPCGVSAPRRAASGPSGSAP) are disordered. The span at 32–46 (SAPRRAASGPSGSAP) shows a compositional bias: low complexity. CoA-binding positions include 224 to 227 (RGGR) and Thr-341. Lys-396 is modified (N6-acetyllysine). ATP contacts are provided by residues 417–419 (GEP), 441–446 (DTWWQT), Asp-533, and Arg-548. Position 556 (Ser-556) interacts with CoA. Arg-559 contacts ATP. Lys-642 is modified (N6-acetyllysine).

It belongs to the ATP-dependent AMP-binding enzyme family. As to quaternary structure, interacts with SIRT3. In terms of processing, reversibly acetylated on Lys-642. The acetyl-CoA synthase activity is inhibited by acetylation and activated by deacetylation mediated by the deacetylase SIRT3.

The protein localises to the mitochondrion matrix. The enzyme catalyses acetate + ATP + CoA = acetyl-CoA + AMP + diphosphate. The catalysed reaction is propanoate + ATP + CoA = propanoyl-CoA + AMP + diphosphate. With respect to regulation, inhibited by acetylation at Lys-642 and activated by deacetylation mediated by the deacetylase SIRT3. Its function is as follows. Catalyzes the synthesis of acetyl-CoA from short-chain fatty acids. Acetate is the preferred substrate. Can also utilize propionate with a much lower affinity. Provides acetyl-CoA that is utilized mainly for oxidation under ketogenic conditions. Involved in thermogenesis under ketogenic conditions, using acetate as a vital fuel when carbohydrate availability is insufficient. The protein is Acetyl-coenzyme A synthetase 2-like, mitochondrial (ACSS1) of Homo sapiens (Human).